The chain runs to 318 residues: Olfactory receptor-like protein COR1 (318 aa).

Residues 1–26 (MASGNCTTPTTFILSGLTDNPGLQMP) are Extracellular-facing. Asn-5 carries N-linked (GlcNAc...) asparagine glycosylation. A helical membrane pass occupies residues 27 to 49 (LFMVFLAIYTITLLTNLGLIALI). Over 50 to 57 (SVDLHLQT) the chain is Cytoplasmic. A helical transmembrane segment spans residues 58–79 (PMYIFLQNLSFTDAAYSTVITP). Topologically, residues 80-100 (KMLATFLEERKTISYVGCILQ) are extracellular. A disulfide bridge links Cys-97 with Cys-179. A helical membrane pass occupies residues 101 to 120 (YFSFVLLTVTESLLLAVMAY). Over 121 to 139 (DRYVAICKPLLYPSIMTKA) the chain is Cytoplasmic. Residues 140–164 (VCWRLVESLYFLAFLNSLVHTSGLL) form a helical membrane-spanning segment. The Extracellular segment spans residues 165–205 (KLSFCYSNVVNHFFCDISPLFQISSSSIAISELLVIISGSL). The chain crosses the membrane as a helical span at residues 206–226 (FVMSSIIIILISYVFIILTVV). Topologically, residues 227–239 (MIRSKDGKYKAFS) are cytoplasmic. Residues 240–260 (TCTSHLMAVSLFHGTVIFMYL) form a helical membrane-spanning segment. Over 261-271 (RPVKLFSLDTD) the chain is Extracellular. The chain crosses the membrane as a helical span at residues 272 to 292 (KIASLFYTVVIPMLNPLIYSW). Over 293 to 318 (RNKEVKDALRRLTATTFGFIDSKAVQ) the chain is Cytoplasmic.

It belongs to the G-protein coupled receptor 1 family.

The protein resides in the cell membrane. Functionally, odorant receptor. The chain is Olfactory receptor-like protein COR1 (COR1) from Gallus gallus (Chicken).